The primary structure comprises 274 residues: tRNA-cytidine(32) 2-sulfurtransferase (274 aa).

The PP-loop motif motif lies at 40–45 (SGGKDS). Cys-115, Cys-118, and Cys-206 together coordinate [4Fe-4S] cluster.

This sequence belongs to the TtcA family. As to quaternary structure, homodimer. Requires Mg(2+) as cofactor. [4Fe-4S] cluster is required as a cofactor.

Its subcellular location is the cytoplasm. It carries out the reaction cytidine(32) in tRNA + S-sulfanyl-L-cysteinyl-[cysteine desulfurase] + AH2 + ATP = 2-thiocytidine(32) in tRNA + L-cysteinyl-[cysteine desulfurase] + A + AMP + diphosphate + H(+). The protein operates within tRNA modification. Functionally, catalyzes the ATP-dependent 2-thiolation of cytidine in position 32 of tRNA, to form 2-thiocytidine (s(2)C32). The sulfur atoms are provided by the cysteine/cysteine desulfurase (IscS) system. The chain is tRNA-cytidine(32) 2-sulfurtransferase from Pseudomonas syringae pv. syringae (strain B728a).